The primary structure comprises 421 residues: MDLENKVKKMGLGHEQGFGAPCLKCKEKCEGFELHFWRKICRNCKCGQEEHDVLLSNEEDRKVGKLFEDTKYTTLIAKLKSDGIPMYKRNVMILTNPVAAKKNVSINTVTYEWAPPVQNQALARQYMQMLPKEKQPVAGSEGAQYRKKQLAKQLPAHDQDPSKCHELSPREVKEMEQFVKKYKSEALGVGDVKLPCEMDAQGPKQMNIPGGDRSTPAAVGAMEDKSAEHKRTQYSCYCCKLSMKEGDPAIYAERAGYDKLWHPACFVCSTCHELLVDMIYFWKNEKLYCGRHYCDSEKPRCAGCDELIFSNEYTQAENQNWHLKHFCCFDCDSILAGEIYVMVNDKPVCKPCYVKNHAVVCQGCHNAIDPEVQRVSYNNFSWHASTECFLCSCCSKCLIGQKFMPVEGMVFCSVECKKMMS.

A PET domain is found at 92-199 (MILTNPVAAK…GDVKLPCEMD (108 aa)). Residues 133–164 (EKQPVAGSEGAQYRKKQLAKQLPAHDQDPSKC) are disordered. Residues 155 to 164 (PAHDQDPSKC) are compositionally biased toward basic and acidic residues. 3 LIM zinc-binding domains span residues 234–297 (YSCY…CDSE), 299–359 (PRCA…NHAV), and 362–421 (QGCH…KMMS).

This sequence belongs to the prickle / espinas / testin family. In terms of assembly, interacts via LIM domain 1 with ZYX. Interacts (via LIM domain 3) with ENAH and VASP. Interacts with ALKBH4, talin, actin, alpha-actinin, GRIP1 and PXN. Interacts (via LIM domain 2) with ACTL7A (via N-terminus). Heterodimer with ACTL7A; the heterodimer interacts with ENAH to form a heterotrimer.

It localises to the cytoplasm. Its subcellular location is the cell junction. The protein localises to the focal adhesion. Scaffold protein that may play a role in cell adhesion, cell spreading and in the reorganization of the actin cytoskeleton. Plays a role in the regulation of cell proliferation. May act as a tumor suppressor. This chain is Testin (TES), found in Papio anubis (Olive baboon).